Consider the following 312-residue polypeptide: Methionyl-tRNA formyltransferase (312 aa).

A (6S)-5,6,7,8-tetrahydrofolate-binding site is contributed by 111-114; sequence SLLP.

This sequence belongs to the Fmt family.

The catalysed reaction is L-methionyl-tRNA(fMet) + (6R)-10-formyltetrahydrofolate = N-formyl-L-methionyl-tRNA(fMet) + (6S)-5,6,7,8-tetrahydrofolate + H(+). Attaches a formyl group to the free amino group of methionyl-tRNA(fMet). The formyl group appears to play a dual role in the initiator identity of N-formylmethionyl-tRNA by promoting its recognition by IF2 and preventing the misappropriation of this tRNA by the elongation apparatus. The polypeptide is Methionyl-tRNA formyltransferase (Myxococcus xanthus (strain DK1622)).